A 75-amino-acid chain; its full sequence is Small ribosomal subunit protein eS28 (75 aa).

This sequence belongs to the eukaryotic ribosomal protein eS28 family.

The protein is Small ribosomal subunit protein eS28 of Methanococcus aeolicus (strain ATCC BAA-1280 / DSM 17508 / OCM 812 / Nankai-3).